The sequence spans 78 residues: Defensin-like protein 74 (78 aa).

The N-terminal stretch at 1 to 28 (MNYKIGIMSLLVITSIIFLFLVPDKVEA) is a signal peptide. Cystine bridges form between C32/C73, C36/C58, C42/C71, and C46/C72.

The protein belongs to the DEFL family.

Its subcellular location is the secreted. The polypeptide is Defensin-like protein 74 (LCR43) (Arabidopsis thaliana (Mouse-ear cress)).